The sequence spans 266 residues: Glutamate racemase (266 aa).

Substrate is bound by residues 9-10 and 41-42; these read DS and YG. Cys-72 acts as the Proton donor/acceptor in catalysis. 73-74 lines the substrate pocket; that stretch reads NT. Cys-183 acts as the Proton donor/acceptor in catalysis. Substrate is bound at residue 184 to 185; sequence TH.

Belongs to the aspartate/glutamate racemases family.

The catalysed reaction is L-glutamate = D-glutamate. Its pathway is cell wall biogenesis; peptidoglycan biosynthesis. Its function is as follows. Provides the (R)-glutamate required for cell wall biosynthesis. This chain is Glutamate racemase, found in Listeria monocytogenes serotype 4a (strain HCC23).